Here is a 473-residue protein sequence, read N- to C-terminus: Photosystem II CP43 reaction center protein (473 aa).

Residues 1–14 (MKTLYSLRRFYHVE) constitute a propeptide that is removed on maturation. The residue at position 15 (threonine 15) is an N-acetylthreonine. Phosphothreonine is present on threonine 15. The next 5 membrane-spanning stretches (helical) occupy residues 69 to 93 (LFEVAHFVPEKPMYEQGLILLPHLA), 134 to 155 (LLGPETLEESFPFFGYVWKDRN), 178 to 200 (KALYFGGVYDTWAPGGGDVRKIT), 255 to 275 (KPFAWARRALVWSGEAYLSYS), and 291 to 312 (WFNNTAYPSEFYGPTGPEASQA). [CaMn4O5] cluster is bound at residue glutamate 367. Residues 447-471 (RARAAAAGFEKGIDRDFEPVLSMTP) traverse the membrane as a helical segment.

This sequence belongs to the PsbB/PsbC family. PsbC subfamily. As to quaternary structure, PSII is composed of 1 copy each of membrane proteins PsbA, PsbB, PsbC, PsbD, PsbE, PsbF, PsbH, PsbI, PsbJ, PsbK, PsbL, PsbM, PsbT, PsbX, PsbY, PsbZ, Psb30/Ycf12, at least 3 peripheral proteins of the oxygen-evolving complex and a large number of cofactors. It forms dimeric complexes. Binds multiple chlorophylls and provides some of the ligands for the Ca-4Mn-5O cluster of the oxygen-evolving complex. It may also provide a ligand for a Cl- that is required for oxygen evolution. PSII binds additional chlorophylls, carotenoids and specific lipids. is required as a cofactor.

The protein localises to the plastid. It is found in the chloroplast thylakoid membrane. One of the components of the core complex of photosystem II (PSII). It binds chlorophyll and helps catalyze the primary light-induced photochemical processes of PSII. PSII is a light-driven water:plastoquinone oxidoreductase, using light energy to abstract electrons from H(2)O, generating O(2) and a proton gradient subsequently used for ATP formation. In Aethionema cordifolium (Lebanon stonecress), this protein is Photosystem II CP43 reaction center protein.